The chain runs to 142 residues: Non-specific lipid transfer protein GPI-anchored 34 (142 aa).

A signal peptide spans 1–22 (MAVAVTAVLFLAVVIAPQWTET). Residues 21 to 43 (ETKKPPRPSDTSDTSGTSGRDRR) are disordered. Residues 29–38 (SDTSDTSGTS) show a composition bias toward low complexity. Intrachain disulfides connect C46–C85, C57–C69, C70–C106, and C83–C114. N120 is lipidated: GPI-anchor amidated asparagine. Residues 121-142 (GGATKKIVASMGLFGVVASLFF) constitute a propeptide, removed in mature form.

This sequence belongs to the plant LTP family.

The protein localises to the cell membrane. Probable lipid transfer protein. The chain is Non-specific lipid transfer protein GPI-anchored 34 from Arabidopsis thaliana (Mouse-ear cress).